Reading from the N-terminus, the 202-residue chain is Small ribosomal subunit protein uS2 (202 aa).

This sequence belongs to the universal ribosomal protein uS2 family. As to quaternary structure, part of the 30S ribosomal subunit.

This Pyrococcus furiosus (strain ATCC 43587 / DSM 3638 / JCM 8422 / Vc1) protein is Small ribosomal subunit protein uS2.